Consider the following 254-residue polypeptide: Putative epimerase LsrE (254 aa).

A helical membrane pass occupies residues 14–34 (VALLASYPLSVGILAGQWIAL). Residues His-50, Asp-52, and His-81 each coordinate a divalent metal cation. Asp-52 (proton acceptor) is an active-site residue. Substrate is bound by residues His-81, 166–169 (GYGS), 199–201 (DGS), and 221–222 (GS). Asp-199 provides a ligand contact to a divalent metal cation. The Proton donor role is filled by Asp-199.

It belongs to the ribulose-phosphate 3-epimerase family. A divalent metal cation is required as a cofactor.

Its subcellular location is the cell membrane. The protein is Putative epimerase LsrE (lsrE) of Salmonella typhi.